The following is a 139-amino-acid chain: Holo-[acyl-carrier-protein] synthase (139 aa).

The Mg(2+) site is built by Asp-8 and Glu-61.

It belongs to the P-Pant transferase superfamily. AcpS family. It depends on Mg(2+) as a cofactor.

Its subcellular location is the cytoplasm. It catalyses the reaction apo-[ACP] + CoA = holo-[ACP] + adenosine 3',5'-bisphosphate + H(+). Functionally, transfers the 4'-phosphopantetheine moiety from coenzyme A to a Ser of acyl-carrier-protein. The sequence is that of Holo-[acyl-carrier-protein] synthase from Nitrobacter hamburgensis (strain DSM 10229 / NCIMB 13809 / X14).